Here is a 239-residue protein sequence, read N- to C-terminus: MKVTLFVTCLVDMFETNVGKATVEVLERLGCEIEFPEAQVCCGQPAYNSGHVEAAKEAMKHMIETFEDAEYIVTPSGSCATMFHEYPHVFKDDPKWAKRAQKVADKTYEFTQFIVDVLNVTDVGASLPGIATIHKSCHMTRMLGVTEAPGILLSNVKGLTVRELPNVQNCCGFGGTFSVKMTPISEQMVDEKVDSAMETGADYLIGADCGCLLNIGGRIERLGKEIKVMHIAEVLNSRS.

It belongs to the LutA/YkgE family.

Is involved in L-lactate degradation and allows cells to grow with lactate as the sole carbon source. In Bacillus cereus (strain AH820), this protein is Lactate utilization protein A 1.